The sequence spans 402 residues: CinA-like protein (402 aa).

The protein belongs to the CinA family.

The protein is CinA-like protein of Fusobacterium nucleatum subsp. nucleatum (strain ATCC 25586 / DSM 15643 / BCRC 10681 / CIP 101130 / JCM 8532 / KCTC 2640 / LMG 13131 / VPI 4355).